The primary structure comprises 558 residues: Inositol-3-phosphate synthase 1 (558 aa).

Positions 67, 68, 69, 70, 141, 177, 178, 188, 191, 228, 229, 230, 231, 278, 279, 303, 306, 337, 338, 339, and 352 each coordinate NAD(+). S279 carries the post-translational modification Phosphoserine. S357 is subject to Phosphoserine. Positions 390, 391, 419, and 420 each coordinate NAD(+). The tract at residues 537–558 (ATNGCTGDANGHLQEEPPMPTT) is disordered.

The protein belongs to the myo-inositol 1-phosphate synthase family. NAD(+) serves as cofactor. Post-translationally, phosphorylation at Ser-279 and Ser-357 may be associated with a decrease in activity. Highly expressed in testis, ovary, heart, placenta and pancreas. Weakly expressed in blood leukocyte, thymus, skeletal muscle and colon.

Its subcellular location is the cytoplasm. The catalysed reaction is D-glucose 6-phosphate = 1D-myo-inositol 3-phosphate. The protein operates within polyol metabolism; myo-inositol biosynthesis; myo-inositol from D-glucose 6-phosphate: step 1/2. Its activity is regulated as follows. Inhibited by mood-stabilizing drugs such as valproate (VPA) and lithium. Its function is as follows. Key enzyme in myo-inositol biosynthesis pathway that catalyzes the conversion of glucose 6-phosphate to 1-myo-inositol 1-phosphate in a NAD-dependent manner. Rate-limiting enzyme in the synthesis of all inositol-containing compounds. In Homo sapiens (Human), this protein is Inositol-3-phosphate synthase 1 (ISYNA1).